A 189-amino-acid chain; its full sequence is Movement protein p22 (189 aa).

The protein belongs to the tombusvirus/aureusvirus movement protein p22 family. Interacts with host protein HFI22. Phosphorylated.

The protein resides in the host membrane. Its function is as follows. Cell-to-cell movement. Displays RNA-binding activity. The polypeptide is Movement protein p22 (Capsicum annuum (Capsicum pepper)).